The sequence spans 71 residues: Protein SlyX homolog (71 aa).

The tract at residues 49–71 (KIKESQSSSSMMSNEPEPPPPHY) is disordered.

This sequence belongs to the SlyX family.

The protein is Protein SlyX homolog of Pseudoalteromonas translucida (strain TAC 125).